A 210-amino-acid chain; its full sequence is Regulator of G-protein signaling 17 (210 aa).

Residues 1 to 21 (MRKRQQSQNEGTSAVSQAPGN) are disordered. The region spanning 84–200 (NFDKMMKTPA…LNSQIYKSLV (117 aa)) is the RGS domain.

As to quaternary structure, interacts with GNAI1 and GNAQ. Interacts with GNAZ and GNAI2. Forms a complex with mu-opioid receptors and G(alpha)z/i2 subunits, including GNAZ and GNAI2; the formation of this complex results in mu-opioid receptor desensitization. Post-translationally, N- and O-glycosylated in synapsomal membranes. Serine phosphorylated in synapsomal membranes. In terms of processing, sumoylated with SUMO1 and SUM02 in synaptosomes. The sumoylated forms act as a scaffold for sequestering mu-opioid receptor-activated G(alpha) subunits.

The protein resides in the membrane. Its subcellular location is the synapse. It is found in the synaptosome. The protein localises to the nucleus. It localises to the cytoplasm. Functionally, regulates G protein-coupled receptor signaling cascades, including signaling via muscarinic acetylcholine receptor CHRM2 and dopamine receptor DRD2. Inhibits signal transduction by increasing the GTPase activity of G protein alpha subunits, thereby driving them into their inactive GDP-bound form. Binds selectively to GNAZ and GNAI2 subunits, accelerates their GTPase activity and regulates their signaling activities. Negatively regulates mu-opioid receptor-mediated activation of the G-proteins. The sequence is that of Regulator of G-protein signaling 17 (RGS17) from Gallus gallus (Chicken).